An 880-amino-acid chain; its full sequence is Interference hedgehog (880 aa).

Residues 1-20 (MTLLTSSLLFFSLLTSRLEA) form the signal peptide. Residues 21–703 (IPVLEKSPAH…ETFNMSPMLT (683 aa)) lie on the Extracellular side of the membrane. Ig-like C2-type domains lie at 45 to 142 (PGVR…IARL), 132 to 234 (PLVV…IQLT), 252 to 340 (PHLL…YIKV), and 346 to 432 (PQIV…LQVN). 4 disulfide bridges follow: Cys-68–Cys-126, Cys-173–Cys-220, Cys-276–Cys-324, and Cys-367–Cys-414. Asn-102 and Asn-209 each carry an N-linked (GlcNAc...) asparagine glycan. The interval 426 to 467 (GTLLQVNPKQIQEPRESGGTHRPKPNQGSKQKQMYPPTPPNV) is disordered. Fibronectin type-III domains lie at 461–567 (PPTP…LQPG) and 575–670 (VPEL…TQRP). The N-linked (GlcNAc...) asparagine glycan is linked to Asn-466. Arg-497, Lys-501, Lys-503, and Arg-541 together coordinate heparin. N-linked (GlcNAc...) asparagine glycosylation occurs at Asn-557. The segment at 662–697 (LKQGRTQRPKTSTTEEPTLQMGDRDTTTPSHNETFN) is disordered. Polar residues-rich tracts occupy residues 665-678 (GRTQRPKTSTTEEP) and 688-697 (TTPSHNETFN). An N-linked (GlcNAc...) asparagine glycan is attached at Asn-693. Residues 704 to 724 (GTIGGGAVLILLLISTCLCVC) traverse the membrane as a helical segment. Residues 725–880 (RRRSSRSRGN…SSGSLNSVGV (156 aa)) lie on the Cytoplasmic side of the membrane. Disordered stretches follow at residues 728-762 (SSRSRGNNPNKPRMAELRDDFVPLGNCSPTKQRQR) and 775-880 (QQQQ…SVGV). Composition is skewed to low complexity over residues 823–837 (RAGGSNGSNNGNNNN) and 864–880 (SSRSENLSSGSLNSVGV).

Belongs to the immunoglobulin superfamily. IHOG family. As to quaternary structure, homodimer. Heterotetramer; 2 iHog chains bind 2 hh chains when facilitated by heparin, heparin is required to promote high-affinity interactions between hh and iHog.

Its subcellular location is the membrane. Functionally, mediates response to the active Hedgehog (Hh) protein signal in embryos, functioning upstream or at the level of patched (ptc). The polypeptide is Interference hedgehog (Drosophila yakuba (Fruit fly)).